Reading from the N-terminus, the 1613-residue chain is Myosin-IIIa (1613 aa).

In terms of domain architecture, Protein kinase spans Trp21–Ile287. Residues Ile27–Val35 and Lys50 contribute to the ATP site. Catalysis depends on Asp150, which acts as the Proton acceptor. Residues Lys338–Lys1052 form the Myosin motor domain. The interval Leu933 to Asn955 is actin-binding. 2 IQ domains span residues Ala1054–Ser1083 and Arg1081–Thr1110. Disordered regions lie at residues Val1136–Phe1168 and Ser1476–Thr1506. Over residues Pro1145 to Ser1161 the composition is skewed to low complexity. The interval Glu1398–Ser1476 is interaction with MORN4. Over residues Arg1488–Lys1497 the composition is skewed to basic residues.

This sequence in the C-terminal section; belongs to the TRAFAC class myosin-kinesin ATPase superfamily. Myosin family. It in the N-terminal section; belongs to the protein kinase superfamily. STE Ser/Thr protein kinase family. In terms of assembly, interacts with MORN4. Interacts (via C-terminus) with ESPN and ESPNL. In terms of tissue distribution, expressed in the cochlear hair cells (at protein level). Expressed in utricle hair bundles (at protein level).

It is found in the cytoplasm. The protein resides in the cytoskeleton. The protein localises to the cell projection. Its subcellular location is the filopodium tip. It localises to the stereocilium. The catalysed reaction is L-seryl-[protein] + ATP = O-phospho-L-seryl-[protein] + ADP + H(+). The enzyme catalyses L-threonyl-[protein] + ATP = O-phospho-L-threonyl-[protein] + ADP + H(+). It catalyses the reaction ATP + H2O = ADP + phosphate + H(+). In terms of biological role, actin-dependent motor protein with a protein kinase activity, playing an essential role in hearing. Probably plays also a role in vision. Required for normal cochlear hair bundle development and hearing. Plays an important role in the early steps of cochlear hair bundle morphogenesis. Influences the number and lengths of stereocilia to be produced and limits the growth of microvilli within the forming auditory hair bundles thereby contributing to the architecture of the hair bundle, including its staircase pattern. Involved in the elongation of actin in stereocilia tips by transporting the actin regulatory factor ESPN to the plus ends of actin filaments. This chain is Myosin-IIIa (Myo3a), found in Mus musculus (Mouse).